The following is a 212-amino-acid chain: MKKVLITGFEPFGGDAINPALEAVKRLEETSLDGGIIVTCQVPVTRFESISAVIDAIEAYQPDCVITVGQAAGRAAITPERVAINVDDFRIPDNGGNQPIDEPIIEQGPDAYFSSLPIKRIAQTLHESGIPCQVSNSAGTFVCNHLFYGVQHYLRDKSIRHGFVHIPLLPEQATDGNHPSMSLDMIVAGLKLVAQVVIDHESDVVVSGGQIC.

Residues glutamate 80, cysteine 143, and histidine 165 contribute to the active site.

This sequence belongs to the peptidase C15 family. Homotetramer.

The protein resides in the cytoplasm. The catalysed reaction is Release of an N-terminal pyroglutamyl group from a polypeptide, the second amino acid generally not being Pro.. In terms of biological role, removes 5-oxoproline from various penultimate amino acid residues except L-proline. The chain is Pyrrolidone-carboxylate peptidase from Vibrio parahaemolyticus serotype O3:K6 (strain RIMD 2210633).